Here is a 105-residue protein sequence, read N- to C-terminus: Small ribosomal subunit protein uS10 (105 aa).

This sequence belongs to the universal ribosomal protein uS10 family. As to quaternary structure, part of the 30S ribosomal subunit.

Involved in the binding of tRNA to the ribosomes. This Phytoplasma australiense protein is Small ribosomal subunit protein uS10.